Consider the following 78-residue polypeptide: MQNSKTDMCAALWAVTGLVLNVAVRFALEPFKESMGQGWHTAARVAVNGAIVLALADRLSDSPVTMTLFVMALSASPE.

Residues 1 to 27 form the signal peptide; it reads MQNSKTDMCAALWAVTGLVLNVAVRFA.

This is an uncharacterized protein from Dryophytes versicolor (chameleon treefrog).